Consider the following 1617-residue polypeptide: ATP-binding cassette sub-family A member 6 (1617 aa).

A helical membrane pass occupies residues 31-51 (LLEWGLSILLGLCIALFSSSM). N-linked (GlcNAc...) asparagine glycans are attached at residues Asn84 and Asn109. The next 6 membrane-spanning stretches (helical) occupy residues 222 to 242 (MFIL…SLNV), 268 to 288 (GLIY…IITF), 297 to 317 (FMVI…LVFL), 327 to 347 (LTNL…FTVF), 355 to 375 (LEWI…IQII), and 397 to 417 (IATF…ALYF). Residues 478 to 713 (IRIRNVKKEY…WGLGYHLSLH (236 aa)) form the ABC transporter 1 domain. 514 to 521 (GHSGAGKS) provides a ligand contact to ATP. The helical transmembrane segment at 854-874 (VLLTLLLVFGIAIFPLIVENI) threads the bilayer. Residue Asn940 is glycosylated (N-linked (GlcNAc...) asparagine). 6 consecutive transmembrane segments (helical) span residues 1007 to 1027 (IGLW…LCSI), 1062 to 1082 (ALVD…IFYI), 1094 to 1114 (IVFA…FFIY), 1127 to 1147 (SGLW…ITLI), 1150 to 1170 (FDLS…LLGF), and 1194 to 1214 (ATDF…VFVL). Residues 1288–1513 (GQKKSCFSKR…LGKDYILELK (226 aa)) enclose the ABC transporter 2 domain. 1320 to 1327 (GPNGAGKS) is a binding site for ATP.

Belongs to the ABC transporter superfamily. ABCA family. Widely expressed with higher expression in liver.

Its subcellular location is the golgi apparatus membrane. Functionally, probable transporter which may play a role in macrophage lipid transport and homeostasis. In Homo sapiens (Human), this protein is ATP-binding cassette sub-family A member 6 (ABCA6).